Consider the following 380-residue polypeptide: Cytochrome b (380 aa).

The next 4 helical transmembrane spans lie at 33-53 (FGSLLGLCLIAQILTGLFLAM), 77-98 (WLIRNLHANGASFFFICLYLHV), 113-133 (WNIGVVLLLLVMMTAFVGYVL), and 178-198 (FFAFHFLFPFIIAAMVLLHLL). Residues histidine 83 and histidine 97 each contribute to the heme b site. Histidine 182 and histidine 196 together coordinate heme b. Histidine 201 lines the a ubiquinone pocket. The next 4 membrane-spanning stretches (helical) occupy residues 226–246 (YKDLFGFVILLLALSILTLFS), 288–308 (LGGVLALLASILILMVVPLLH), 320–340 (LTQILFWTLVADVAILTWIGG), and 347–367 (FITVGQVASVLYFALFLILIP).

Belongs to the cytochrome b family. In terms of assembly, the cytochrome bc1 complex contains 3 respiratory subunits (MT-CYB, CYC1 and UQCRFS1), 2 core proteins (UQCRC1 and UQCRC2) and probably 6 low-molecular weight proteins. The cofactor is heme b.

It localises to the mitochondrion inner membrane. Component of the ubiquinol-cytochrome c reductase complex (complex III or cytochrome b-c1 complex) that is part of the mitochondrial respiratory chain. The b-c1 complex mediates electron transfer from ubiquinol to cytochrome c. Contributes to the generation of a proton gradient across the mitochondrial membrane that is then used for ATP synthesis. The polypeptide is Cytochrome b (mt-cyb) (Allocyttus niger (Black oreo dory)).